Consider the following 649-residue polypeptide: Glycerol-3-phosphate dehydrogenase, mitochondrial (649 aa).

69-97 (DVLIIGGGATGTGVAVDASTRGLNVCLLE) contributes to the FAD binding site.

This sequence belongs to the FAD-dependent glycerol-3-phosphate dehydrogenase family. It depends on FAD as a cofactor.

It is found in the mitochondrion. The enzyme catalyses a quinone + sn-glycerol 3-phosphate = dihydroxyacetone phosphate + a quinol. The protein operates within polyol metabolism; glycerol degradation via glycerol kinase pathway; glycerone phosphate from sn-glycerol 3-phosphate (anaerobic route): step 1/1. The protein is Glycerol-3-phosphate dehydrogenase, mitochondrial (gut2) of Schizosaccharomyces pombe (strain 972 / ATCC 24843) (Fission yeast).